Consider the following 514-residue polypeptide: Glutathione-binding protein GsiB (514 aa).

An N-terminal signal peptide occupies residues 1 to 27; it reads MSVMTIQRRWLVAAGVTAAMVASPVWA.

Belongs to the bacterial solute-binding protein 5 family. In terms of assembly, the complex is composed of two ATP-binding proteins (GsiA), two transmembrane proteins (GsiC and GsiD) and a solute-binding protein (GsiB).

It localises to the periplasm. Part of the ABC transporter complex GsiABCD involved in glutathione import. Binds glutathione. This is Glutathione-binding protein GsiB from Pectobacterium atrosepticum (strain SCRI 1043 / ATCC BAA-672) (Erwinia carotovora subsp. atroseptica).